Reading from the N-terminus, the 210-residue chain is Thymidylate kinase (210 aa).

Residue glycine 11 to serine 18 participates in ATP binding.

This sequence belongs to the thymidylate kinase family.

The catalysed reaction is dTMP + ATP = dTDP + ADP. Its function is as follows. Phosphorylation of dTMP to form dTDP in both de novo and salvage pathways of dTTP synthesis. The polypeptide is Thymidylate kinase (Histophilus somni (strain 2336) (Haemophilus somnus)).